The chain runs to 156 residues: rRNA methyltransferase (156 aa).

Its function is as follows. Modifies 16S rRNA so making ribosomes resistant to certain aminoglycosides. The chain is rRNA methyltransferase (kamC) from Saccharopolyspora hirsuta.